A 158-amino-acid chain; its full sequence is Cyclic pyranopterin monophosphate synthase (158 aa).

Substrate is bound by residues 74-76 (MCH) and 112-113 (ME). D127 is a catalytic residue.

It belongs to the MoaC family. In terms of assembly, homohexamer; trimer of dimers.

The catalysed reaction is (8S)-3',8-cyclo-7,8-dihydroguanosine 5'-triphosphate = cyclic pyranopterin phosphate + diphosphate. It functions in the pathway cofactor biosynthesis; molybdopterin biosynthesis. Functionally, catalyzes the conversion of (8S)-3',8-cyclo-7,8-dihydroguanosine 5'-triphosphate to cyclic pyranopterin monophosphate (cPMP). The protein is Cyclic pyranopterin monophosphate synthase of Thermoanaerobacter pseudethanolicus (strain ATCC 33223 / 39E) (Clostridium thermohydrosulfuricum).